We begin with the raw amino-acid sequence, 307 residues long: Alginate lyase (307 aa).

An N-terminal signal peptide occupies residues 1–20; sequence MLKSGVMVASLCLFSVPSRA.

This sequence belongs to the polysaccharide lyase 7 family.

Its subcellular location is the secreted. The catalysed reaction is Eliminative cleavage of alginate to give oligosaccharides with 4-deoxy-alpha-L-erythro-hex-4-enuronosyl groups at their non-reducing ends and beta-D-mannuronate at their reducing end.. Its function is as follows. Degrades alginates that contain guluronic acid. The chain is Alginate lyase (alyA) from Klebsiella pneumoniae.